The primary structure comprises 296 residues: 3-methyl-2-oxobutanoate hydroxymethyltransferase (296 aa).

Positions 1 to 14 are enriched in low complexity; that stretch reads MTAPTPTPANAATP. The interval 1-29 is disordered; that stretch reads MTAPTPTPANAATPYGTLPPASPLPQRRP. 2 residues coordinate Mg(2+): Asp71 and Asp114. 3-methyl-2-oxobutanoate-binding positions include 71 to 72, Asp114, and Lys143; that span reads DS. Glu145 contributes to the Mg(2+) binding site. Glu212 acts as the Proton acceptor in catalysis.

Belongs to the PanB family. Homodecamer; pentamer of dimers. It depends on Mg(2+) as a cofactor.

Its subcellular location is the cytoplasm. It catalyses the reaction 3-methyl-2-oxobutanoate + (6R)-5,10-methylene-5,6,7,8-tetrahydrofolate + H2O = 2-dehydropantoate + (6S)-5,6,7,8-tetrahydrofolate. It functions in the pathway cofactor biosynthesis; (R)-pantothenate biosynthesis; (R)-pantoate from 3-methyl-2-oxobutanoate: step 1/2. In terms of biological role, catalyzes the reversible reaction in which hydroxymethyl group from 5,10-methylenetetrahydrofolate is transferred onto alpha-ketoisovalerate to form ketopantoate. In Paracidovorax citrulli (strain AAC00-1) (Acidovorax citrulli), this protein is 3-methyl-2-oxobutanoate hydroxymethyltransferase.